The sequence spans 268 residues: Lipopolysaccharide core heptose(I) kinase WaaP (268 aa).

Residues tyrosine 30, tyrosine 48, and tyrosine 98 each carry the phosphotyrosine; by autocatalysis modification. Residue aspartate 163 is part of the active site. Phosphotyrosine; by autocatalysis is present on residues tyrosine 165, tyrosine 211, tyrosine 231, tyrosine 258, and tyrosine 264.

This sequence belongs to the protein kinase superfamily. KdkA/RfaP family. As to quaternary structure, interacts with acyl-AcpP. The WaaP hydrophobic channel can accommodate acyl chains of different lengths, but myristyl-ACP is likely its physiological binding partner. Mg(2+) is required as a cofactor.

It is found in the cytoplasm. The catalysed reaction is an L-alpha-D-Hep-(1-&gt;3)-L-alpha-D-Hep-(1-&gt;5)-[alpha-Kdo-(2-&gt;4)]-alpha-Kdo-(2-&gt;6)-lipid A + ATP = an L-alpha-D-Hep-(1-&gt;3)-4-O-phospho-L-alpha-D-Hep-(1-&gt;5)-[alpha-Kdo-(2-&gt;4)]-alpha-Kdo-(2-&gt;6)-lipid A + ADP + H(+). The enzyme catalyses L-tyrosyl-[protein] + ATP = O-phospho-L-tyrosyl-[protein] + ADP + H(+). Its pathway is bacterial outer membrane biogenesis; LPS core biosynthesis. With respect to regulation, acylated-acyl carrier protein (acyl-ACP) acts as a very tightly bound cofactor necessary for the production and stability of active WaaP kinase. In terms of biological role, kinase involved in the biosynthesis of the core oligosaccharide region of lipopolysaccharide (LPS). Catalyzes the phosphorylation of heptose I (HepI), the first heptose added to the Kdo2-lipid A module. Also has protein-tyrosine kinase activity: autophosphorylates on all Tyr residues; in vitro can phosphorylate poly(Glu,Tyr). This Pseudomonas aeruginosa (strain ATCC 15692 / DSM 22644 / CIP 104116 / JCM 14847 / LMG 12228 / 1C / PRS 101 / PAO1) protein is Lipopolysaccharide core heptose(I) kinase WaaP.